The following is a 140-amino-acid chain: Myelodysplastic syndrome 2 translocation-associated protein (140 aa).

In terms of tissue distribution, highly expressed in peripheral blood leukocytes, spleen, thymus, kidney, pancreas and lung.

This chain is Myelodysplastic syndrome 2 translocation-associated protein (MDS2), found in Homo sapiens (Human).